A 259-amino-acid chain; its full sequence is Thiazole synthase (259 aa).

The active-site Schiff-base intermediate with DXP is Lys-98. Residues Gly-159, 185–186, and 207–208 contribute to the 1-deoxy-D-xylulose 5-phosphate site; these read AG and NS.

Belongs to the ThiG family. Homotetramer. Forms heterodimers with either ThiH or ThiS.

Its subcellular location is the cytoplasm. It catalyses the reaction [ThiS sulfur-carrier protein]-C-terminal-Gly-aminoethanethioate + 2-iminoacetate + 1-deoxy-D-xylulose 5-phosphate = [ThiS sulfur-carrier protein]-C-terminal Gly-Gly + 2-[(2R,5Z)-2-carboxy-4-methylthiazol-5(2H)-ylidene]ethyl phosphate + 2 H2O + H(+). It functions in the pathway cofactor biosynthesis; thiamine diphosphate biosynthesis. Its function is as follows. Catalyzes the rearrangement of 1-deoxy-D-xylulose 5-phosphate (DXP) to produce the thiazole phosphate moiety of thiamine. Sulfur is provided by the thiocarboxylate moiety of the carrier protein ThiS. In vitro, sulfur can be provided by H(2)S. The protein is Thiazole synthase of Chlorobium phaeovibrioides (strain DSM 265 / 1930) (Prosthecochloris vibrioformis (strain DSM 265)).